We begin with the raw amino-acid sequence, 174 residues long: Crossover junction endodeoxyribonuclease RuvC (174 aa).

Residues aspartate 8, glutamate 67, and aspartate 139 contribute to the active site. Positions 8, 67, and 139 each coordinate Mg(2+).

This sequence belongs to the RuvC family. As to quaternary structure, homodimer which binds Holliday junction (HJ) DNA. The HJ becomes 2-fold symmetrical on binding to RuvC with unstacked arms; it has a different conformation from HJ DNA in complex with RuvA. In the full resolvosome a probable DNA-RuvA(4)-RuvB(12)-RuvC(2) complex forms which resolves the HJ. It depends on Mg(2+) as a cofactor.

The protein localises to the cytoplasm. It carries out the reaction Endonucleolytic cleavage at a junction such as a reciprocal single-stranded crossover between two homologous DNA duplexes (Holliday junction).. The RuvA-RuvB-RuvC complex processes Holliday junction (HJ) DNA during genetic recombination and DNA repair. Endonuclease that resolves HJ intermediates. Cleaves cruciform DNA by making single-stranded nicks across the HJ at symmetrical positions within the homologous arms, yielding a 5'-phosphate and a 3'-hydroxyl group; requires a central core of homology in the junction. The consensus cleavage sequence is 5'-(A/T)TT(C/G)-3'. Cleavage occurs on the 3'-side of the TT dinucleotide at the point of strand exchange. HJ branch migration catalyzed by RuvA-RuvB allows RuvC to scan DNA until it finds its consensus sequence, where it cleaves and resolves the cruciform DNA. The protein is Crossover junction endodeoxyribonuclease RuvC of Pseudomonas putida (strain ATCC 47054 / DSM 6125 / CFBP 8728 / NCIMB 11950 / KT2440).